The primary structure comprises 193 residues: PBAN-type neuropeptides (193 aa).

The first 19 residues, 1 to 19, serve as a signal peptide directing secretion; sequence MYGAVLPGLFFIFISCVVA. Ile-46 is modified (isoleucine amide). Leu-102 and Leu-122 each carry leucine amide. The interval 124 to 158 is disordered; that stretch reads RRLADDTPATPADQEMYRPDPEQIDSRTKYFSPRL. Residues 138 to 151 show a composition bias toward basic and acidic residues; the sequence is EMYRPDPEQIDSRT. A leucine amide mark is found at Leu-158 and Leu-168. A propeptide spanning residues 186-193 is cleaved from the precursor; sequence STNKTQST.

Belongs to the pyrokinin family. Expressed in the mandibular, maxillary and labial neuromeres of the male and female brain-subesophageal ganglions, in the corpora cardiaca and all around the corpora allata, and at a lower level in the brain near the calyx and pedunculus of the mushroom body (at protein level). Expressed in larvae and adult of both sexes (at protein level). In terms of tissue distribution, expressed in corpora cardiaca (CC), corpora allata (CA) and gnathal ganglion (GNG) (at protein level). Expression in CC and CA detected in most animals, in GNG in some (at protein level). As to expression, expression not detected in CC, CA, AL or GNG (at protein level). Expressed in corpora cardiaca (CC), corpora allata (CA), antennal lobe (AL) and gnathal ganglion (GNG) (at protein level). Expression in CC, CA and GNG detected in most animals, expression in AL detected in few (at protein level). In terms of tissue distribution, expressed in corpora cardiaca (CC), corpora allata (CA), antennal lobe (AL) and gnathal ganglion (GNG) (at protein level). Expression in CC, CA and GNG detected in all animals, expression in AL detected in some (at protein level). As to expression, expressed in corpora cardiaca (CC), corpora allata (CA), antennal lobe (AL) and gnathal ganglion (GNG) (at protein level). Expression in CC, CA and GNG detected in most animals, expression in AL detected in some animals (at protein level).

The protein localises to the secreted. Its function is as follows. A hormone that controls sex pheromone production in female moths and pheromone responsiveness in male. The chain is PBAN-type neuropeptides from Agrotis ipsilon (Black cutworm moth).